We begin with the raw amino-acid sequence, 127 residues long: Large ribosomal subunit protein bL20c (127 aa).

Belongs to the bacterial ribosomal protein bL20 family.

The protein resides in the plastid. It is found in the chloroplast. Its function is as follows. Binds directly to 23S ribosomal RNA and is necessary for the in vitro assembly process of the 50S ribosomal subunit. It is not involved in the protein synthesizing functions of that subunit. This Jasminum nudiflorum (Winter jasmine) protein is Large ribosomal subunit protein bL20c.